Reading from the N-terminus, the 421-residue chain is Cyclin-A2 (421 aa).

M1 bears the N-acetylmethionine mark. Residues M1 to R60 are disordered. A Phosphoserine modification is found at S5.

Belongs to the cyclin family. Cyclin AB subfamily. In terms of assembly, interacts with the CDK1 and CDK2 protein kinases to form serine/threonine kinase holoenzyme complexes. Interacts with CDK1 (hyperphosphorylated form in G1 and underphosphorylated forms in S and G2). Interacts with CDK2; the interaction increases from G1 to G2. Interacts (associated with CDK2 but not with CDK1) with SCAPER; regulates the activity of CCNA2/CDK2 by transiently maintaining CCNA2 in the cytoplasm. Forms a ternary complex with CDK2 and CDKN1B; CDKN1B inhibits the kinase activity of CDK2 through conformational rearrangements. Interacts with INCA1. In terms of processing, polyubiquitinated via 'Lys-11'-linked ubiquitin by the anaphase-promoting complex (APC/C), leading to its degradation by the proteasome. Deubiquitinated and stabilized by USP37 enables entry into S phase. Ubiquitinated during the G1 phase by the SCF(FBXO31) complex, leading to its proteasomal degradation.

The protein localises to the nucleus. Its subcellular location is the cytoplasm. Functionally, cyclin which controls both the G1/S and the G2/M transition phases of the cell cycle. Functions through the formation of specific serine/threonine kinase holoenzyme complexes with the cyclin-dependent protein kinases CDK1 and CDK2. The cyclin subunit confers the substrate specificity of these complexes and differentially interacts with and activates CDK1 and CDK2 throughout the cell cycle. The sequence is that of Cyclin-A2 from Mesocricetus auratus (Golden hamster).